The primary structure comprises 42 residues: Large ribosomal subunit protein bL36 (42 aa).

It belongs to the bacterial ribosomal protein bL36 family.

This Anaplasma marginale (strain St. Maries) protein is Large ribosomal subunit protein bL36.